A 443-amino-acid chain; its full sequence is Threonine/serine transporter TdcC (443 aa).

The next 11 helical transmembrane spans lie at 22–42, 44–64, 97–117, 140–160, 163–183, 207–227, 261–281, 311–331, 366–386, 389–409, and 423–443; these read TTWTLGLFGTAIGAGVLFFPI, AGFGGLIPILLMLVLAYPIAF, GVVITFLYFFAICPLLWIYGV, FVALFLLLLMAFVIWFGKDLM, VMSYLVWPFIASLVLISLSLI, ILITVWLGISIMVFSFNFSPI, MLMVAVVMFFAFSCLFTLSPA, FAITLEYAASIIALVAIFKSF, ISMIFIMGSTWVVAYANPNIL, IEAMGAPIIASLLCLLPMYAI, and DNVFVTVIGLLTILNIVYKLF.

It belongs to the amino acid/polyamine transporter 2 family. SdaC/TdcC subfamily.

It localises to the cell inner membrane. The enzyme catalyses L-threonine(in) + H(+)(in) = L-threonine(out) + H(+)(out). It catalyses the reaction L-serine(in) + H(+)(in) = L-serine(out) + H(+)(out). In terms of biological role, involved in the import of threonine and serine into the cell, with the concomitant import of a proton (symport system). The polypeptide is Threonine/serine transporter TdcC (Shigella sonnei (strain Ss046)).